A 122-amino-acid chain; its full sequence is Small ribosomal subunit protein uS13 (122 aa).

The disordered stretch occupies residues 95 to 122 (GLPVRGQRTKTNARTRKGPKKTIAGKKK).

The protein belongs to the universal ribosomal protein uS13 family. In terms of assembly, part of the 30S ribosomal subunit. Forms a loose heterodimer with protein S19. Forms two bridges to the 50S subunit in the 70S ribosome.

Located at the top of the head of the 30S subunit, it contacts several helices of the 16S rRNA. In the 70S ribosome it contacts the 23S rRNA (bridge B1a) and protein L5 of the 50S subunit (bridge B1b), connecting the 2 subunits; these bridges are implicated in subunit movement. Contacts the tRNAs in the A and P-sites. The polypeptide is Small ribosomal subunit protein uS13 (Corynebacterium glutamicum (strain ATCC 13032 / DSM 20300 / JCM 1318 / BCRC 11384 / CCUG 27702 / LMG 3730 / NBRC 12168 / NCIMB 10025 / NRRL B-2784 / 534)).